Reading from the N-terminus, the 214-residue chain is ATP phosphoribosyltransferase (214 aa).

This sequence belongs to the ATP phosphoribosyltransferase family. Short subfamily. In terms of assembly, heteromultimer composed of HisG and HisZ subunits.

It is found in the cytoplasm. It carries out the reaction 1-(5-phospho-beta-D-ribosyl)-ATP + diphosphate = 5-phospho-alpha-D-ribose 1-diphosphate + ATP. It functions in the pathway amino-acid biosynthesis; L-histidine biosynthesis; L-histidine from 5-phospho-alpha-D-ribose 1-diphosphate: step 1/9. Catalyzes the condensation of ATP and 5-phosphoribose 1-diphosphate to form N'-(5'-phosphoribosyl)-ATP (PR-ATP). Has a crucial role in the pathway because the rate of histidine biosynthesis seems to be controlled primarily by regulation of HisG enzymatic activity. The protein is ATP phosphoribosyltransferase of Methylobacillus flagellatus (strain ATCC 51484 / DSM 6875 / VKM B-1610 / KT).